The primary structure comprises 154 residues: 17.7 kDa class I heat shock protein (154 aa).

One can recognise a sHSP domain in the interval 40–154 (ETSAFANTRI…PDVKSIEISG (115 aa)).

The protein belongs to the small heat shock protein (HSP20) family. In terms of assembly, forms oligomeric structures.

It is found in the cytoplasm. This chain is 17.7 kDa class I heat shock protein, found in Solanum peruvianum (Peruvian tomato).